A 133-amino-acid polypeptide reads, in one-letter code: Small ribosomal subunit protein uS11 (133 aa).

It belongs to the universal ribosomal protein uS11 family. In terms of assembly, part of the 30S ribosomal subunit. Interacts with proteins S7 and S18. Binds to IF-3.

Its function is as follows. Located on the platform of the 30S subunit, it bridges several disparate RNA helices of the 16S rRNA. Forms part of the Shine-Dalgarno cleft in the 70S ribosome. The protein is Small ribosomal subunit protein uS11 of Shouchella clausii (strain KSM-K16) (Alkalihalobacillus clausii).